The following is a 66-amino-acid chain: Large ribosomal subunit protein bL28 (66 aa).

The protein belongs to the bacterial ribosomal protein bL28 family.

The chain is Large ribosomal subunit protein bL28 from Oenococcus oeni (strain ATCC BAA-331 / PSU-1).